The primary structure comprises 607 residues: MPYELKKVFASLPQVERGVAKIITGDPKGNNFLYTNGKSVIIRNIENPAIADIYTEHAHPVVVARYAPSGFYIASGDTSGKLRIWDTTQKEHLLKYEYQPFAGKIKDIAWTEDSKRIAVVGEGREKFGSVFLWDTGSSVGEISGNIKVINSVDIKQTRPYRLVTGSDDNCCAFFEGPPFKFKFTMADHSRFVNCVRFSPDGSRLASAGADGQIFLYDGKTGEKVGNLGGSKAHDGGIYAVSWSADSTQLLSASGDKTAKIWDVAANSAVTTFHLGTEVLDQQLGCLWQKDYLLSVSLSGYINYLDKNNPSRPLRVIKGHNKSIQCMTVHNSDGRSTIYTGSHDGHINYWDAETGENDTFTGKGHTNQVSRMDLDSSNQLITCSMDDTVRYTSLTSKDYSSSESVKMDVQPKCVAVGSGGYVVTLCIGQIVLLKDKKKVFAIDSLDYEPEAVAIHKGSGTVAVGGVDGNVHLYSIQGNSLKDEGKSLPVKGAVTDLAYSHDGAFLAVTDANKVVTVFNVADGYSEQNVYYGHHAKAVSVAWSPDNEHFASSGMDMMVYVWTLSDPDARIKIPDAHRLHHVSSLAWLDEHTLATVSHDACVKQWTVTFK.

13 WD repeats span residues 4-45, 48-87, 93-135, 138-176, 180-218, 224-263, 270-306, 311-351, 358-408, 432-474, 480-518, 523-561, and 566-604; these read ELKK…IRNI, PAIADIYTEHAHPVVVARYAPSGFYIASGDTSGKLRIWDT, LLKY…LWDT, SVGEISGNIKVINSVDIKQTRPYRLVTGSDDNCCAFFEG, KFKFTMADHSRFVNCVRFSPDGSRLASAGADGQIFLYDG, VGNLGGSKAHDGGIYAVSWSADSTQLLSASGDKTAKIWDV, TTFHLGTEVLDQQLGCLWQKDYLLSVSLSGYINYLDK, RPLR…YWDA, TFTG…KMDV, LKDK…LYSI, KDEGKSLPVKGAVTDLAYSHDGAFLAVTDANKVVTVFNV, SEQNVYYGHHAKAVSVAWSPDNEHFASSGMDMMVYVWTL, and ARIKIPDAHRLHHVSSLAWLDEHTLATVSHDACVKQWTV.

This sequence belongs to the WD repeat AIP1 family.

It localises to the cell membrane. It is found in the cytoplasm. The protein localises to the cytoskeleton. Its subcellular location is the nucleus. Its function is as follows. Induces disassembly of actin filaments in conjunction with ADF/cofilin family proteins. Doesn't sever actin filaments alone, but caps the barbed ends of filaments severed by cofilin, which blocks annealing and depolymerization and allows more extensive severing by cofilin. The sequence is that of WD repeat-containing protein 1 from Xenopus tropicalis (Western clawed frog).